We begin with the raw amino-acid sequence, 97 residues long: Large ribosomal subunit protein eL21 (97 aa).

This sequence belongs to the eukaryotic ribosomal protein eL21 family.

This is Large ribosomal subunit protein eL21 from Methanoculleus marisnigri (strain ATCC 35101 / DSM 1498 / JR1).